The primary structure comprises 450 residues: Citrate/malate-proton symporter (450 aa).

Residues 1-32 (MGELQTHMQLQTDTIHEGVRKENWFAKAMNIK) lie on the Cytoplasmic side of the membrane. A helical transmembrane segment spans residues 33–53 (VGIIPLPVYALLFILITVFVM). At 54–64 (HHDVKSDILTS) the chain is on the extracellular side. Residues 65-85 (IAVMAFFGFTFAQIGKSIPIV) form a helical membrane-spanning segment. At 86-87 (RS) the chain is on the cytoplasmic side. The helical transmembrane segment at 88–108 (IGGPAILATFIPSAVVYYHLL) threads the bilayer. The Extracellular portion of the chain corresponds to 109–118 (PNDIVKSTTE). A helical membrane pass occupies residues 119–139 (FTENSNFLYLFIAGIVVGSIL). At 140 to 152 (GMKRETLVKAFMK) the chain is on the cytoplasmic side. The helical transmembrane segment at 153-173 (IFIPLIVGSVTAAIVGLAVGT) threads the bilayer. Residues 174-217 (LLGLGFQHTLLYIVIPIMAGGVGEGAIPLSIGYSDIMPISQGEA) lie on the Extracellular side of the membrane. The helical transmembrane segment at 218–238 (FALVLPSIMLGSLCAIILAGL) threads the bilayer. Over 239–273 (LNRIGKKKPEWTGNGKVDRSEEESPALEESQSGQQ) the chain is Cytoplasmic. A disordered region spans residues 249–268 (WTGNGKVDRSEEESPALEES). Residues 274–294 (MFNLSLFASGGILAVSLYLVG) traverse the membrane as a helical segment. Met295 is a topological domain (extracellular). A helical membrane pass occupies residues 296 to 316 (LAHDFFGFPAPVAMLLLAVLI). Topologically, residues 317–335 (KLFRLVPASIENGAFGVSR) are cytoplasmic. Residues 336 to 356 (FFSTAVTYPLLFAIGVSMTPW) traverse the membrane as a helical segment. Topologically, residues 357–364 (DKLVAAFN) are extracellular. A helical transmembrane segment spans residues 365–385 (LSNIITILSVVVTMMAVGFFT). Residues 386 to 428 (GKWLNMYPIETAIINACHSGQGGTGDVAILSAAERLELMPFAQ) lie on the Cytoplasmic side of the membrane. A helical transmembrane segment spans residues 429 to 446 (VSTRIGGAITVSLTLLLL). Over 447–450 (HQFY) the chain is Extracellular.

Belongs to the 2-hydroxycarboxylate transporter (2-HCT) (TC 2.A.24) family.

The protein resides in the cell membrane. The catalysed reaction is citrate(in) + 3 H(+)(in) = citrate(out) + 3 H(+)(out). It carries out the reaction (S)-malate(in) + 2 H(+)(in) = (S)-malate(out) + 2 H(+)(out). Its activity is regulated as follows. The uptake activity is inhibited by divalent metal ions such as Ca(2+), Mg(2+) and Ni(2+). Functionally, proton motive force-driven secondary transporter that catalyzes the uptake of both citrate and malate. Is an electroneutral proton-solute symporter: the number of protons transported is equal to the valence of the transported anions. Translocates the free citrate and malate anions. Citramalate binds to the transporter, but it is not translocated. Is strictly stereoselective, recognizing only the (S)-enantiomers of malate and citramalate. The protein is Citrate/malate-proton symporter of Bacillus subtilis (strain 168).